The following is a 391-amino-acid chain: Formate-dependent phosphoribosylglycinamide formyltransferase (391 aa).

N(1)-(5-phospho-beta-D-ribosyl)glycinamide contacts are provided by residues 20-21 and E80; that span reads EL. ATP-binding positions include R112, K153, 158–163, 193–196, and E201; these read SSGKGQ and EGFI. The ATP-grasp domain occupies 117–306; that stretch reads RLAAEDLQIP…EFALHVRAFL (190 aa). The Mg(2+) site is built by E265 and E277. N(1)-(5-phospho-beta-D-ribosyl)glycinamide contacts are provided by residues D284, K354, and 361–362; that span reads RR.

It belongs to the PurK/PurT family. In terms of assembly, homodimer.

It catalyses the reaction N(1)-(5-phospho-beta-D-ribosyl)glycinamide + formate + ATP = N(2)-formyl-N(1)-(5-phospho-beta-D-ribosyl)glycinamide + ADP + phosphate + H(+). The protein operates within purine metabolism; IMP biosynthesis via de novo pathway; N(2)-formyl-N(1)-(5-phospho-D-ribosyl)glycinamide from N(1)-(5-phospho-D-ribosyl)glycinamide (formate route): step 1/1. Functionally, involved in the de novo purine biosynthesis. Catalyzes the transfer of formate to 5-phospho-ribosyl-glycinamide (GAR), producing 5-phospho-ribosyl-N-formylglycinamide (FGAR). Formate is provided by PurU via hydrolysis of 10-formyl-tetrahydrofolate. This chain is Formate-dependent phosphoribosylglycinamide formyltransferase, found in Photobacterium profundum (strain SS9).